Here is a 722-residue protein sequence, read N- to C-terminus: MKTMQGKGSGRRLRGALLVTMAASGAIGLAGCGGSNDNTTTTTPTNVKPSFVGTVTVTHFDGVSDDLLTAGLGAAGLASATAPTVANATAPTAAELRRLAIYNNYRALVDTNAKGGYGTLYGPNVDASGNVTSGSGMVPGVEYVAYSDDGSGQQNVVLLVQIPDAFDAANPCIITATSSGSRGIYGAISTGEWGLKRKCAVAYTDKGTRAGPHDLATDTVPLQDGTRTTRAAAGSKAQFAAPLTDTQLAAFNLATPNRLAFKHAHSQRNPEKDWGRFTLQAVQFAFWAINDKLSGGSAPNGSALAVRPDNTIVIASSVSNGGGAAIAAAEQDTTHLIDGVAVGEPGLNLPASANVQVQRGGVTLPVTGKPLFDYVSYANAFRLCAALSSSVSGAPTQSFFAGNIGWPASVQANRCAALHANGLLSSTTTAAQADEALQKMRTYGWEPESDLVHASMAYFEIDPSVATTFGNALARASVLDNLCNFSFAAVDTSFHPTTVNATALAQLASTGNGIPPTTGVQLINNLAQGGATQSKQSVDSSGTQAANLDGALCLRKLLTGADAASQALQLGISQTLRTGNLGGRPALIVQGRNDALLPVNHGARPYLGLNAQVDTSSKLSYIEVTNAQHFDGFIDLVPGYDTLFVPLVLYEQRALDAVYANLKNGTPLPPSQVVRTTPRGGTAGSAPAIAATNVPNFTNTPAVADRISVSVSGGVATVSVPN.

A signal peptide spans methionine 1–glycine 25. The Charge relay system role is filled by serine 319.

The protein belongs to the D-(-)-3-hydroxybutyrate oligomer hydrolase family.

Its subcellular location is the secreted. It carries out the reaction (3R)-hydroxybutanoate dimer + H2O = 2 (R)-3-hydroxybutanoate + H(+). It participates in lipid metabolism; butanoate metabolism. With respect to regulation, inhibited by diisopropylfluorophosphate (DFP). In terms of biological role, participates in the degradation of poly-3-hydroxybutyrate (PHB). It works downstream of poly(3-hydroxybutyrate) depolymerase, hydrolyzing D(-)-3-hydroxybutyrate oligomers of various length (3HB-oligomers) into 3HB-monomers. In Ralstonia pickettii (Burkholderia pickettii), this protein is D-(-)-3-hydroxybutyrate oligomer hydrolase.